The primary structure comprises 732 residues: Small conductance calcium-activated potassium channel protein 3 (732 aa).

Basic and acidic residues predominate over residues 1–11 (MDTSGHFHDSG). Disordered stretches follow at residues 1–82 (MDTS…QQAP) and 103–162 (HSSP…ASPL). A compositionally biased stretch (pro residues) spans 35–59 (QPPPPSAPPAVPQQPPGPLLQPQPP). Residues 60–82 (QLQQQQQQQQQQQQQQQQQQQAP) are compositionally biased toward low complexity. A compositionally biased stretch (polar residues) spans 113-133 (NSANSTAILHPSSRQGSQLNL). The segment covering 139-148 (GHSPSSTATS) has biased composition (low complexity). At Ser-168 the chain carries Phosphoserine. Over residues 241 to 257 (THNHQHAGTTAGSTTFP) the composition is skewed to polar residues. Positions 241-260 (THNHQHAGTTAGSTTFPKAN) are disordered. Residues 289-309 (LIFGMFGIVVMVIETELSWGL) form a helical membrane-spanning segment. A helical transmembrane segment spans residues 316–336 (FSLALKCLISLSTIILLGLII). Residues 367–387 (ISLEMLVCAIHPIPGEYKFFW) traverse the membrane as a helical segment. A helical transmembrane segment spans residues 406 to 426 (IILSIPMFLRLYLIARVMLLH). A helical membrane pass occupies residues 455–475 (LMTICPGTVLLVFSISLWIIA). The segment at residues 495 to 515 (FLGAMWLISITFLSIGYGDMV) is an intramembrane region (pore-forming). Residues 524–544 (VCLLTGIMGAGCTALVVAVVA) form a helical membrane-spanning segment. The segment at 562-638 (DTQLTKRIKN…LVDLSKMQNV (77 aa)) is calmodulin-binding. Residues 643 to 670 (ITELNDRSEDLEKQIGSLESKLEHLTAS) adopt a coiled-coil conformation. Residues 704–732 (GTSHAPPSDSPIGISSTSFPTPYTSSSSC) form a disordered region. Residues 718-732 (SSTSFPTPYTSSSSC) are compositionally biased toward low complexity.

Belongs to the potassium channel KCNN family. KCa2.3/KCNN3 subfamily. As to quaternary structure, homodimer. Heteromultimer with KCNN2 or KCNN1; this modulates plasma membrane expression and consequently the small conductance calcium-activated potassium channel activity. The complex is composed of 4 channel subunits each of which binds to a calmodulin subunit which regulates the channel activity through calcium-binding. Interacts with CALM1.

It is found in the cell membrane. The protein localises to the cytoplasm. Its subcellular location is the myofibril. It localises to the sarcomere. The protein resides in the z line. It carries out the reaction K(+)(in) = K(+)(out). Its activity is regulated as follows. Inhibited by bee venom neurotoxin apamin. Small conductance calcium-activated potassium channel that mediates the voltage-independent transmembrane transfer of potassium across the cell membrane through a constitutive interaction with calmodulin which binds the intracellular calcium allowing its opening. The current is characterized by a voltage-independent activation, an intracellular calcium concentration increase-dependent activation and a single-channel conductance of 10 picosiemens. Also presents an inwardly rectifying current, thus reducing its already small outward conductance of potassium ions, which is particularly the case when the membrane potential displays positive values, above + 20 mV. Activation is followed by membrane hyperpolarization. Thought to regulate neuronal excitability by contributing to the slow component of synaptic afterhyperpolarization. The chain is Small conductance calcium-activated potassium channel protein 3 from Rattus norvegicus (Rat).